Here is a 448-residue protein sequence, read N- to C-terminus: Ribulose bisphosphate carboxylase large chain (448 aa).

The propeptide occupies 1–2 (MS). Pro-3 carries the post-translational modification N-acetylproline. Position 14 is an N6,N6,N6-trimethyllysine (Lys-14). Substrate is bound by residues Asn-122 and Thr-172. Catalysis depends on Lys-174, which acts as the Proton acceptor. Lys-176 is a binding site for substrate. Mg(2+) is bound by residues Lys-200, Asp-202, and Glu-203. Lys-200 carries the post-translational modification N6-carboxylysine. The active-site Proton acceptor is His-293. Positions 294, 326, and 378 each coordinate substrate.

This sequence belongs to the RuBisCO large chain family. Type I subfamily. Heterohexadecamer of 8 large chains and 8 small chains; disulfide-linked. The disulfide link is formed within the large subunit homodimers. Requires Mg(2+) as cofactor. The disulfide bond which can form in the large chain dimeric partners within the hexadecamer appears to be associated with oxidative stress and protein turnover.

It localises to the plastid. It is found in the chloroplast. It carries out the reaction 2 (2R)-3-phosphoglycerate + 2 H(+) = D-ribulose 1,5-bisphosphate + CO2 + H2O. It catalyses the reaction D-ribulose 1,5-bisphosphate + O2 = 2-phosphoglycolate + (2R)-3-phosphoglycerate + 2 H(+). RuBisCO catalyzes two reactions: the carboxylation of D-ribulose 1,5-bisphosphate, the primary event in carbon dioxide fixation, as well as the oxidative fragmentation of the pentose substrate in the photorespiration process. Both reactions occur simultaneously and in competition at the same active site. The protein is Ribulose bisphosphate carboxylase large chain of Dichapetalum crassifolium.